The chain runs to 623 residues: Replication protein A 70 kDa DNA-binding subunit (623 aa).

N-acetylmethionine is present on methionine 1. Residues lysine 22 and lysine 88 each participate in a glycyl lysine isopeptide (Lys-Gly) (interchain with G-Cter in ubiquitin) cross-link. Residues 116–163 (VPYNEGYGQQQQQQQQQQQQAVPSPASAATPPASKPQPQNGSLGMGST) form a disordered region. A compositionally biased stretch (low complexity) spans 124-154 (QQQQQQQQQQQQAVPSPASAATPPASKPQPQ). N6-acetyllysine; alternate occurs at positions 172 and 176. Glycyl lysine isopeptide (Lys-Gly) (interchain with G-Cter in ubiquitin); alternate cross-links involve residues lysine 172 and lysine 176. Threonine 189 carries the phosphothreonine modification. A Glycyl lysine isopeptide (Lys-Gly) (interchain with G-Cter in ubiquitin) cross-link involves residue lysine 192. At threonine 200 the chain carries Phosphothreonine. Positions 206–290 (WTICARVTNK…VKNDYEMTFN (85 aa)) form a DNA-binding region, OB. Glycyl lysine isopeptide (Lys-Gly) (interchain with G-Cter in ubiquitin) cross-links involve residues lysine 229 and lysine 253. Lysine 268 is subject to N6-acetyllysine; alternate. Lysine 268 is covalently cross-linked (Glycyl lysine isopeptide (Lys-Gly) (interchain with G-Cter in ubiquitin); alternate). Glycyl lysine isopeptide (Lys-Gly) (interchain with G-Cter in ubiquitin) cross-links involve residues lysine 276 and lysine 340. Phosphoserine is present on serine 393. Lysine 419 is covalently cross-linked (Glycyl lysine isopeptide (Lys-Gly) (interchain with G-Cter in ubiquitin)). Lysine 458 participates in a covalent cross-link: Glycyl lysine isopeptide (Lys-Gly) (interchain with G-Cter in SUMO). Residue lysine 467 forms a Glycyl lysine isopeptide (Lys-Gly) (interchain with G-Cter in ubiquitin) linkage. Residues 490 to 512 (CPTQDCNKKVIDQQNGLYRCEKC) form a C4-type zinc finger. Lysine 562 is covalently cross-linked (Glycyl lysine isopeptide (Lys-Gly) (interchain with G-Cter in ubiquitin)). Lysine 586 participates in a covalent cross-link: Glycyl lysine isopeptide (Lys-Gly) (interchain with G-Cter in SUMO).

This sequence belongs to the replication factor A protein 1 family. In terms of assembly, component of the canonical replication protein A complex (RPA), a heterotrimer composed of RPA1, RPA2 and RPA3. The DNA-binding activity may reside exclusively on the RPA1 subunit. Interacts with PRPF19; the PRP19-CDC5L complex is recruited to the sites of DNA repair where it ubiquitinates the replication protein A complex (RPA). Interacts with RIPK1. Interacts with the polymerase alpha subunit POLA1/p180; this interaction stabilizes the replicative complex and reduces the misincorporation rate of DNA polymerase alpha by acting as a fidelity clamp. Interacts with RAD51 and SENP6 to regulate DNA repair. Interacts with HELB; this interaction promotes HELB recruitment to chromatin following DNA damage. Interacts with PRIMPOL; leading to recruit PRIMPOL on chromatin and stimulate its DNA primase activity. Interacts with XPA; the interaction is direct and associates XPA with the RPA complex. Interacts with ETAA1; the interaction is direct and promotes ETAA1 recruitment at stalled replication forks. Interacts with RPA1; this interaction associates HROB with the RPA complex. Interacts (when poly-ADP-ribosylated) with HTATSF1. Post-translationally, DNA damage-induced 'Lys-63'-linked polyubiquitination by PRPF19 mediates ATRIP recruitment to the RPA complex at sites of DNA damage and activation of ATR. Ubiquitinated by RFWD3 at stalled replication forks in response to DNA damage: ubiquitination by RFWD3 does not lead to degradation by the proteasome and promotes removal of the RPA complex from stalled replication forks, promoting homologous recombination. In terms of processing, sumoylated on lysine residues Lys-458 and Lys-586, with Lys-458 being the major site. Sumoylation promotes recruitment of RAD51 to the DNA damage foci to initiate DNA repair through homologous recombination. Desumoylated by SENP6. Poly-ADP-ribosylated by PARP1; promoting recruitment of HTATSF1.

The protein localises to the nucleus. It is found in the PML body. Functionally, as part of the heterotrimeric replication protein A complex (RPA/RP-A), binds and stabilizes single-stranded DNA intermediates, that form during DNA replication or upon DNA stress. It prevents their reannealing and in parallel, recruits and activates different proteins and complexes involved in DNA metabolism. Thereby, it plays an essential role both in DNA replication and the cellular response to DNA damage. In the cellular response to DNA damage, the RPA complex controls DNA repair and DNA damage checkpoint activation. Through recruitment of ATRIP activates the ATR kinase a master regulator of the DNA damage response. It is required for the recruitment of the DNA double-strand break repair factors RAD51 and RAD52 to chromatin in response to DNA damage. Also recruits to sites of DNA damage proteins like XPA and XPG that are involved in nucleotide excision repair and is required for this mechanism of DNA repair. Also plays a role in base excision repair (BER) probably through interaction with UNG. Also recruits SMARCAL1/HARP, which is involved in replication fork restart, to sites of DNA damage. May also play a role in telomere maintenance. The sequence is that of Replication protein A 70 kDa DNA-binding subunit (Rpa1) from Mus musculus (Mouse).